Consider the following 181-residue polypeptide: Kappa-casein (181 aa).

Positions 1–21 are cleaved as a signal peptide; sequence MMRNFIVVVNILALTLPFLAA. Residue Thr123 is modified to Phosphothreonine. O-linked (GalNAc...) threonine glycans are attached at residues Thr134, Thr144, and Thr155. Phosphoserine; alternate is present on Ser162. Residue Ser162 is glycosylated (O-linked (GalNAc...) serine; alternate). Residue Ser178 is modified to Phosphoserine.

The protein belongs to the kappa-casein family. In terms of tissue distribution, mammary gland specific. Secreted in milk.

It localises to the secreted. Its function is as follows. Kappa-casein stabilizes micelle formation, preventing casein precipitation in milk. The polypeptide is Kappa-casein (Csn3) (Mus musculus (Mouse)).